The sequence spans 236 residues: CHD1 helical C-terminal domain containing protein 1 (236 aa).

The tract at residues 1–29 (MEASDWQGGEGDKPLEKVGSVPCLERSSS) is disordered. The tract at residues 44–145 (LSQDTFKICK…TNQTAKFLAA (102 aa)) is CHD1 helical C-terminal domain (CHCT). A disordered region spans residues 197 to 236 (LEEPRSSHCSRGDSLRKLPQKPKLKKKRIKERLESPKSCS). Residues 198 to 212 (EEPRSSHCSRGDSLR) show a composition bias toward basic and acidic residues. A compositionally biased stretch (basic residues) spans 214–226 (LPQKPKLKKKRIK). Residues 227–236 (ERLESPKSCS) show a composition bias toward basic and acidic residues.

Exclusively expressed in testes.

The protein localises to the cytoplasm. Its subcellular location is the nucleus. Its function is as follows. May play a role in regulation of apoptosis. The polypeptide is CHD1 helical C-terminal domain containing protein 1 (Chct1) (Mus musculus (Mouse)).